A 604-amino-acid chain; its full sequence is MGAALGTGTRLAPWPGRACGALPRWTPTAPAQGCHSKPGPARPVPLKKRGYDVTRNPHLNKGMAFTLEERLQLGIHGLIPPCFLSQDVQLLRIMRYYERQQSDLDKYIILMTLQDRNEKLFYRVLTSDVEKFMPIVYTPTVGLACQHYGLTFRRPRGLFITIHDKGHLATMLNSWPEDNIKAVVVTDGERILGLGDLGCYGMGIPVGKLALYTACGGVNPQQCLPVLLDVGTNNEELLRDPLYIGLKHQRVHGKAYDDLLDEFMQAVTDKFGINCLIQFEDFANANAFRLLNKYRNKYCMFNDDIQGTASVAVAGILAALRITKNKLSNHVFVFQGAGEAAMGIAHLLVMALEKEGVPKAEATRKIWMVDSKGLIVKGRSHLNHEKEMFAQDHPEVNSLEEVVRLVKPTAIIGVAAIAGAFTEQILRDMASFHERPIIFALSNPTSKAECTAEKCYRVTEGRGIFASGSPFKSVTLEDGKTFIPGQGNNAYVFPGVALGVIAGGIRHIPDEIFLLTAEQIAQEVSEQHLSQGRLYPPLSTIRDVSLRIAIKVLDYAYKHNLASYYPEPKDKEAFVRSLVYTPDYDSFTLDSYTWPKEAMNVQTV.

The segment at 29–50 (APAQGCHSKPGPARPVPLKKRG) is disordered. Residue Y137 is the Proton donor of the active site. Residue R190 coordinates NAD(+). The Proton acceptor role is filled by K208. Residues E280, D281, and D304 each contribute to the a divalent metal cation site. Residue D304 participates in NAD(+) binding. S371 is subject to Phosphoserine. An NAD(+)-binding site is contributed by N443.

Belongs to the malic enzymes family. Mg(2+) serves as cofactor. The cofactor is Mn(2+). Expressed predominantly in organs with a low-division rate.

It is found in the mitochondrion matrix. It catalyses the reaction (S)-malate + NADP(+) = pyruvate + CO2 + NADPH. The catalysed reaction is oxaloacetate + H(+) = pyruvate + CO2. In terms of biological role, catalyzes the oxidative decarboxylation of (S)-malate to pyruvate using NADP(+) as a cofactor. Can also reverse the decarboxylation reaction, but only with significantly lower efficiency. The polypeptide is NADP-dependent malic enzyme, mitochondrial (Homo sapiens (Human)).